Reading from the N-terminus, the 436-residue chain is MSDRQQVTNARGERIAIVSGLRTPFAKQATAFHGVSALDMGKMVVNELLSRSELNPKEIEQLVYGQVVQMPAAPNIAREIVLGTGMDVSTDAYSVTRACATSFQSTVNVAESIMTGNMDIGIAGGADSSSVLPIGVSKKLAHALVDLNKARSFGQKLAIFRRLGLKDLLPVPPAVAEYSTGLSMGQTAEQMAKTYNISRADQDALAHRSHTLATETWNAGKLAEEVMAAHVPPYKSFIDRDNNIRENSTLESYAKLRPAFDRKHGSVTAANSTPLTDGASAVLLMSEGRAKALGYTPIGYIKSYAFTAIDVWQDMLMGPSYATPLALKRAGMELEDLTLIEMHEAFAAQTLANMQMFASKKFAEEKLGRNRAIGEIDMSKFNVLGGSLAYGHPFAATGTRLVTQVCHELKRRGGGTGLATACAAGGLGAAMIVEVE.

Cys-99 (acyl-thioester intermediate) is an active-site residue. Residues His-392 and Cys-422 each act as proton acceptor in the active site.

The protein belongs to the thiolase-like superfamily. Thiolase family. In terms of assembly, heterotetramer of two alpha chains (FadJ) and two beta chains (FadI).

The protein resides in the cytoplasm. The catalysed reaction is an acyl-CoA + acetyl-CoA = a 3-oxoacyl-CoA + CoA. It participates in lipid metabolism; fatty acid beta-oxidation. Catalyzes the final step of fatty acid oxidation in which acetyl-CoA is released and the CoA ester of a fatty acid two carbons shorter is formed. The chain is 3-ketoacyl-CoA thiolase from Shewanella halifaxensis (strain HAW-EB4).